The following is a 142-amino-acid chain: Transcriptional regulator MraZ (142 aa).

SpoVT-AbrB domains follow at residues 5 to 47 (THTP…PAPE) and 76 to 119 (AHDE…DRVA).

This sequence belongs to the MraZ family. In terms of assembly, forms oligomers.

It localises to the cytoplasm. Its subcellular location is the nucleoid. In Salinispora arenicola (strain CNS-205), this protein is Transcriptional regulator MraZ.